Reading from the N-terminus, the 148-residue chain is NADH-quinone oxidoreductase subunit A (148 aa).

3 consecutive transmembrane segments (helical) span residues W14–G34, F68–W88, and V98–V118.

This sequence belongs to the complex I subunit 3 family. In terms of assembly, NDH-1 is composed of 13 different subunits. Subunits NuoA, H, J, K, L, M, N constitute the membrane sector of the complex.

Its subcellular location is the cell inner membrane. It catalyses the reaction a quinone + NADH + 5 H(+)(in) = a quinol + NAD(+) + 4 H(+)(out). Its function is as follows. NDH-1 shuttles electrons from NADH, via FMN and iron-sulfur (Fe-S) centers, to quinones in the respiratory chain. The immediate electron acceptor for the enzyme in this species is believed to be ubiquinone. Couples the redox reaction to proton translocation (for every two electrons transferred, four hydrogen ions are translocated across the cytoplasmic membrane), and thus conserves the redox energy in a proton gradient. The polypeptide is NADH-quinone oxidoreductase subunit A (Klebsiella pneumoniae subsp. pneumoniae (strain ATCC 700721 / MGH 78578)).